The primary structure comprises 260 residues: MTAETERIGVKGGMEYSFGFTKIDEAQKQSMVDGVFHSVAENYDKMNDILSLGLHRMWKNSMVAWLSPPAVFHWKVLDVAGGTGDIAFRILNASRQKAHATVLDINGSMLSVGKKRAEKNGLAPLIDFVEANAEHLPFEDQSFDAYTIAFGIRNVPHIDQALREAFRVLKPGGRFLCLEFSNVEMPLLDKIYDLWSFHAIPKLGQLIANDGDAYRYLVESIRKFPKQDDFAHMINHVGFSRVSYRNLTGAIAALHSAWKI.

Residues threonine 83, aspartate 104, and 132–133 each bind S-adenosyl-L-methionine; that span reads NA.

It belongs to the class I-like SAM-binding methyltransferase superfamily. MenG/UbiE family.

It carries out the reaction a 2-demethylmenaquinol + S-adenosyl-L-methionine = a menaquinol + S-adenosyl-L-homocysteine + H(+). The catalysed reaction is a 2-methoxy-6-(all-trans-polyprenyl)benzene-1,4-diol + S-adenosyl-L-methionine = a 5-methoxy-2-methyl-3-(all-trans-polyprenyl)benzene-1,4-diol + S-adenosyl-L-homocysteine + H(+). Its pathway is quinol/quinone metabolism; menaquinone biosynthesis; menaquinol from 1,4-dihydroxy-2-naphthoate: step 2/2. It participates in cofactor biosynthesis; ubiquinone biosynthesis. Methyltransferase required for the conversion of demethylmenaquinol (DMKH2) to menaquinol (MKH2) and the conversion of 2-polyprenyl-6-methoxy-1,4-benzoquinol (DDMQH2) to 2-polyprenyl-3-methyl-6-methoxy-1,4-benzoquinol (DMQH2). The protein is Ubiquinone/menaquinone biosynthesis C-methyltransferase UbiE of Bartonella henselae (strain ATCC 49882 / DSM 28221 / CCUG 30454 / Houston 1) (Rochalimaea henselae).